The chain runs to 179 residues: MSRIGKMPIPLSNQAKIEITDTDLTVTGPKGKLHQALTPQVIITQEDGVVTVQRIDDSKKAKAMHGLYRVLISNMVEGVTNGFTRKLEIAGVGYRAELKNDFLALTLGYSHMIYFKAPDEITIQVPDQTTILVTGIDKALVGQVAAKIRSFRKPEPYRGKGIKYEGEVIRRKEGKAAGK.

This sequence belongs to the universal ribosomal protein uL6 family. As to quaternary structure, part of the 50S ribosomal subunit.

This protein binds to the 23S rRNA, and is important in its secondary structure. It is located near the subunit interface in the base of the L7/L12 stalk, and near the tRNA binding site of the peptidyltransferase center. The sequence is that of Large ribosomal subunit protein uL6 from Chlorobium phaeobacteroides (strain DSM 266 / SMG 266 / 2430).